The following is a 731-amino-acid chain: Penicillin-binding protein 2a (731 aa).

The Cytoplasmic portion of the chain corresponds to 1–56 (MKLDKLFEKFLSLFKKETSELEDSDSTILRRSRSDRKKLAQVGPIRKFWRRYHLTK). A helical; Signal-anchor for type II membrane protein membrane pass occupies residues 57-77 (IILILGLSAGLLVGIYLFAVA). Positions 78 to 156 (KSTNVNDLQN…FLAIVTAGRS (79 aa)) are hydrophobic; associated with cytoplasmic membrane. Required for transglycosylase activity, but not for lipid II binding. The segment at 78–300 (KSTNVNDLQN…SQLHDKYEGK (223 aa)) is transglycosylase. Residues 78 to 731 (KSTNVNDLQN…IWDSIVNLFR (654 aa)) are Extracellular-facing. The Proton donor; for transglycosylase activity role is filled by E131. A transpeptidase region spans residues 301–731 (ISDYRYPSYF…IWDSIVNLFR (431 aa)). S410 serves as the catalytic Acyl-ester intermediate; for transpeptidase activity. The disordered stretch occupies residues 674–694 (ANTKRQVQTNDNSQTDDNLSD). Over residues 676-690 (TKRQVQTNDNSQTDD) the composition is skewed to polar residues.

This sequence in the N-terminal section; belongs to the glycosyltransferase 51 family. It in the C-terminal section; belongs to the transpeptidase family. As to quaternary structure, homodimer. May also form higher order oligomers. Self-association may depend on its transmembrane and/or cytoplasmic regions. Interacts with MacP; interaction is required for the function of this protein.

The protein localises to the cell membrane. It localises to the secreted. The protein resides in the cell wall. The enzyme catalyses Preferential cleavage: (Ac)2-L-Lys-D-Ala-|-D-Ala. Also transpeptidation of peptidyl-alanyl moieties that are N-acyl substituents of D-alanine.. It carries out the reaction [GlcNAc-(1-&gt;4)-Mur2Ac(oyl-L-Ala-gamma-D-Glu-L-Lys-D-Ala-D-Ala)](n)-di-trans,octa-cis-undecaprenyl diphosphate + beta-D-GlcNAc-(1-&gt;4)-Mur2Ac(oyl-L-Ala-gamma-D-Glu-L-Lys-D-Ala-D-Ala)-di-trans,octa-cis-undecaprenyl diphosphate = [GlcNAc-(1-&gt;4)-Mur2Ac(oyl-L-Ala-gamma-D-Glu-L-Lys-D-Ala-D-Ala)](n+1)-di-trans,octa-cis-undecaprenyl diphosphate + di-trans,octa-cis-undecaprenyl diphosphate + H(+). It functions in the pathway cell wall biogenesis; peptidoglycan biosynthesis. Cell wall formation. Synthesis of cross-linked peptidoglycan (PG) from the lipid intermediates. Binds dansylated lipid II and catalyzes the polymerization of glycan chains. Hydrolyzes S2d (N-benzoyl-D-alanylmercaptoacetic acid) molecule, a synthetic thiolester analog of cell wall stem peptide. Active against bocillin, a fluorescent penicillin. No transpeptidase activity with non-fluorescent lysine-containing lipid II as substrate. The sequence is that of Penicillin-binding protein 2a from Streptococcus pneumoniae serotype 2 (strain D39 / NCTC 7466).